Reading from the N-terminus, the 453-residue chain is UPF0210 protein MM_0081 (453 aa).

This sequence belongs to the UPF0210 family.

The chain is UPF0210 protein MM_0081 from Methanosarcina mazei (strain ATCC BAA-159 / DSM 3647 / Goe1 / Go1 / JCM 11833 / OCM 88) (Methanosarcina frisia).